Consider the following 108-residue polypeptide: Nucleoid-associated protein Avin_19840 (108 aa).

Belongs to the YbaB/EbfC family. Homodimer.

The protein resides in the cytoplasm. Its subcellular location is the nucleoid. In terms of biological role, binds to DNA and alters its conformation. May be involved in regulation of gene expression, nucleoid organization and DNA protection. The polypeptide is Nucleoid-associated protein Avin_19840 (Azotobacter vinelandii (strain DJ / ATCC BAA-1303)).